We begin with the raw amino-acid sequence, 152 residues long: Nascent polypeptide-associated complex subunit beta (152 aa).

2 disordered regions span residues 19–39 (IGKG…AGDD) and 125–152 (NMQK…SKVE). The span at 23-32 (TPRRKVKRAP) shows a compositional bias: basic residues. An NAC-A/B domain is found at 36–101 (AGDDKKLQAT…GEDKELTELV (66 aa)).

This sequence belongs to the NAC-beta family. In terms of assembly, part of the nascent polypeptide-associated complex (NAC), consisting of npc-1/egd2 and npc-2/egd1. NAC associates with ribosomes via npc-2/egd1.

Its subcellular location is the cytoplasm. The protein resides in the nucleus. Component of the nascent polypeptide-associated complex (NAC), a dynamic component of the ribosomal exit tunnel, protecting the emerging polypeptides from interaction with other cytoplasmic proteins to ensure appropriate nascent protein targeting. The NAC complex also promotes mitochondrial protein import by enhancing productive ribosome interactions with the outer mitochondrial membrane and blocks the inappropriate interaction of ribosomes translating non-secretory nascent polypeptides with translocation sites in the membrane of the endoplasmic reticulum. Npc-2/egd1 may act as a transcription factor that exert a negative effect on the expression of several genes that are transcribed by RNA polymerase II. The polypeptide is Nascent polypeptide-associated complex subunit beta (npc-2) (Neurospora crassa (strain ATCC 24698 / 74-OR23-1A / CBS 708.71 / DSM 1257 / FGSC 987)).